We begin with the raw amino-acid sequence, 232 residues long: CD302 antigen (232 aa).

Positions 1 to 22 (MPRAAPPALLLPLLGLAAAAAA) are cleaved as a signal peptide. Residues 23–168 (DCPSSTWVQF…YEKKYLSDNR (146 aa)) lie on the Extracellular side of the membrane. Positions 32–152 (FQDSCYIFLQ…CEVSSVEGTL (121 aa)) constitute a C-type lectin domain. N-linked (GlcNAc...) asparagine glycosylation occurs at asparagine 109. A disulfide bridge links cysteine 128 with cysteine 143. The helical transmembrane segment at 169-189 (ILISALVIASTVILTVLGAVV) threads the bilayer. Residues 190-232 (WFLYKRSLDSGFTTVFSAAHQSPYNDDCVLVVAEENEYDIQFN) lie on the Cytoplasmic side of the membrane.

It is found in the membrane. The protein localises to the cell projection. Its subcellular location is the filopodium. It localises to the cytoplasm. The protein resides in the cell cortex. It is found in the microvillus. In terms of biological role, potential multifunctional C-type lectin receptor that may play roles in endocytosis and phagocytosis as well as in cell adhesion and migration. The sequence is that of CD302 antigen from Bos taurus (Bovine).